Consider the following 495-residue polypeptide: Probable endopolygalacturonase D (495 aa).

A signal peptide spans 1–16 (MKRSALLASFLPLALG). A disulfide bridge connects residues C154 and C169. PbH1 repeat units lie at residues 261 to 283 (MYNS…EIEN), 284 to 322 (TEYL…DIKQ), and 323 to 344 (SDFL…AVTS). N295 carries N-linked (GlcNAc...) asparagine glycosylation. Residue D337 is the Proton donor of the active site. An intrachain disulfide couples C339 to C355. Residue H359 is part of the active site. N-linked (GlcNAc...) asparagine glycosylation is present at N371. PbH1 repeat units follow at residues 374-395 (VDGV…RIKS) and 403-425 (VYNV…DIQQ). N-linked (GlcNAc...) asparagine glycans are attached at residues N410 and N444. Cystine bridges form between C464/C469 and C487/C494. One copy of the PbH1 6 repeat lies at 469–492 (CSNFVFTDVDITGGSDDSCNYPSS).

It belongs to the glycosyl hydrolase 28 family.

It is found in the secreted. The catalysed reaction is (1,4-alpha-D-galacturonosyl)n+m + H2O = (1,4-alpha-D-galacturonosyl)n + (1,4-alpha-D-galacturonosyl)m.. Functionally, involved in maceration and soft-rotting of plant tissue. Hydrolyzes the 1,4-alpha glycosidic bonds of de-esterified pectate in the smooth region of the plant cell wall. The polypeptide is Probable endopolygalacturonase D (pgaD) (Aspergillus niger (strain ATCC MYA-4892 / CBS 513.88 / FGSC A1513)).